A 37-amino-acid polypeptide reads, in one-letter code: Photosystem I reaction center subunit VIII (37 aa).

The helical transmembrane segment at Ile10–Tyr30 threads the bilayer.

This sequence belongs to the PsaI family.

The protein resides in the plastid. Its subcellular location is the chloroplast thylakoid membrane. Its function is as follows. May help in the organization of the PsaL subunit. The chain is Photosystem I reaction center subunit VIII from Gossypium hirsutum (Upland cotton).